A 166-amino-acid polypeptide reads, in one-letter code: Cold-inducible RNA-binding protein B (166 aa).

The region spanning 5–83 (GKLFIGGLNF…RQIRVDQAGK (79 aa)) is the RRM domain. The segment at 68-166 (GKAVDGRQIR…DSYDSYATHE (99 aa)) is disordered. A compositionally biased stretch (gly residues) spans 92–115 (YRGGSSGGRGFFRGGRGRGGGDRG). The span at 133–149 (GSRDYYSSGRSQGSYGD) shows a compositional bias: low complexity. Positions 157 to 166 (DSYDSYATHE) are enriched in basic and acidic residues.

As to quaternary structure, interacts with prmt1. Interacts with elavl1/elrA (via RRM3). Associates with ribosomes. Methylated on arginine residues within RGG motifs. Methylation by prmt1 promotes cytoplasmic accumulation. As to expression, in adults, most abundant in testis, ovary, brain and liver, with lower expression in kidney and heart.

Its subcellular location is the nucleus. It is found in the nucleoplasm. The protein resides in the cytoplasm. Cold-inducible mRNA binding protein. Acts cooperatively with elavl1/elrA to stabilize AU-rich element (ARE)-containing mRNAs by binding to them and inhibiting their deadenylation. Essential for embryonic gastrulation and neural development, acting to maintain the expression of a set of adhesion molecules, and cell movement during embryogenesis. Required for pronephros development. The sequence is that of Cold-inducible RNA-binding protein B (cirbp-b) from Xenopus laevis (African clawed frog).